We begin with the raw amino-acid sequence, 197 residues long: Probable GTP-binding protein EngB (197 aa).

The EngB-type G domain occupies alanine 22 to valine 195. GTP contacts are provided by residues glycine 30 to serine 37, glycine 57 to threonine 61, aspartate 75 to glycine 78, threonine 142 to aspartate 145, and phenylalanine 174 to alanine 176. Serine 37 and threonine 59 together coordinate Mg(2+).

This sequence belongs to the TRAFAC class TrmE-Era-EngA-EngB-Septin-like GTPase superfamily. EngB GTPase family. The cofactor is Mg(2+).

Necessary for normal cell division and for the maintenance of normal septation. The chain is Probable GTP-binding protein EngB from Limosilactobacillus fermentum (strain NBRC 3956 / LMG 18251) (Lactobacillus fermentum).